The chain runs to 876 residues: MEMKPKYDPREVEKGRYEEWVSNGYFKPSEDKSKEAYTIVIPPPNVTGKLHLGHAWDTTLQDIITRMKRMQGYDTLYLPGMDHAGIATQAKVEAKLNEQGISRHDLGREKFLQQAWDWKEEYATFIRQQWAKLGLGLDYSRERFTLDDGLSKAVRKVFVDLYNKGIIYRGERIINWDPKARTALSDIEVIHEDVQGAFYHFKYPYADGNGYIEIATTRPETMLGDTAIVVNPNDERYKDVIGKTVILPIVGRELPILADEYVDIEFGSGAMKVTPAHDPNDFEIGQRHQLENIIVMDEYGKMNDKADKYKGMDRFDCRNQLVKDLKEQDLVIKIEEHTHSVGHSERSGAIVEPYLSTQWFVKMKPLAQRALDNQNTKDRIDFFPGRFENTFNRWMEEIRDWTISRQLWWGHQIPAWYHKDTGEVFVGEEAPEDIENWIQDEDVLDTWFSSALWPFSTLGWPDTNADDFKRYYPTNALVTGYDIIFFWVARMIFQGLEFTDRRPFNDVLLHGLVRAEDGRKMSKSLGNGVDPMDVIDEYGADSLRYFLATGSSPGHDLRYSTEKVESVWNFINKIWNAARFSLMNIGEDFKVEDIDLSGNLSLADQWILTRLNETISTVTELSDKYEFGEVGRALYNFIWDEFCDWYIEMSKIPMNGEDESQKQTTRSVLSYVLDKIMKMLHPFMPFVTETIWQSLPHHGETIVKANWPTVDQALIFNESKQTMEQLVEIIKSVRQSRVEVNTPLSKAIPILIQTKDEKIKHTLMDNISYLHKFCNPSQLTIDTEIEIPEKAMTTVVVAGKVVLPLEGLIDMDKEIARLEKELDKLQSELDRVDKKLSNENFVNKAPEKIINEEKEKQQHYQEKYNGVKSRIEQLKA.

Positions 44–54 (PNVTGKLHLGH) match the 'HIGH' region motif. Residues 520 to 524 (KMSKS) carry the 'KMSKS' region motif. Lysine 523 contacts ATP. The stretch at 805–876 (LEGLIDMDKE…VKSRIEQLKA (72 aa)) forms a coiled coil.

Belongs to the class-I aminoacyl-tRNA synthetase family. ValS type 1 subfamily. As to quaternary structure, monomer.

Its subcellular location is the cytoplasm. The catalysed reaction is tRNA(Val) + L-valine + ATP = L-valyl-tRNA(Val) + AMP + diphosphate. Functionally, catalyzes the attachment of valine to tRNA(Val). As ValRS can inadvertently accommodate and process structurally similar amino acids such as threonine, to avoid such errors, it has a 'posttransfer' editing activity that hydrolyzes mischarged Thr-tRNA(Val) in a tRNA-dependent manner. The protein is Valine--tRNA ligase of Staphylococcus epidermidis (strain ATCC 35984 / DSM 28319 / BCRC 17069 / CCUG 31568 / BM 3577 / RP62A).